Consider the following 145-residue polypeptide: Putative pre-16S rRNA nuclease (145 aa).

Belongs to the YqgF nuclease family.

Its subcellular location is the cytoplasm. In terms of biological role, could be a nuclease involved in processing of the 5'-end of pre-16S rRNA. The chain is Putative pre-16S rRNA nuclease from Thiobacillus denitrificans (strain ATCC 25259 / T1).